A 509-amino-acid chain; its full sequence is MEEFQRYIELDRSWQHNFFYPLIFQEYIYGFAYDHGLNKSILLENAGDKKYSLLIVKRLITRMYQQNHLILSANHSNQNDFFGHKHKKNLYYQIISEGFAVIVEIPFSLLLISSLGAKEKKIVKSHNLRSIHSIFPFFEDKFLHLNYVLEILIPYPIHLEILVQTLRYWVKDASSLHLLRFFLYEYRNWNSLITTQKSISIFSKRNQRLFLFLYNFHVCEYESIFVFLCNQSSHLRSTSFGALLERIYFYGKLEYLVKVFTFTKDFRVILWLFKDPFLHYVRYRGKSILASKGTSLLMHKWKYYLINFWQCHFSLWSQPRRIYINRLSKHSLDFMDFFSSVRLNSSVVRSQMVENSFLIDNPIKKFDTIVRIIPLVGSLAKAKFCNVLGHPISKSVWTDLLDSDIIDRFGRICRNLSHYYSGSSRKKSLYRIKYILRLSCARTLARKHKSTVRAFLKRLGSEFLEEFFTEEEKVLSLILPRDSSISRGLYRGPFWYLDIFCIHDLANDE.

It belongs to the intron maturase 2 family. MatK subfamily.

It localises to the plastid. The protein localises to the chloroplast. Its function is as follows. Usually encoded in the trnK tRNA gene intron. Probably assists in splicing its own and other chloroplast group II introns. The sequence is that of Maturase K from Pereskia aculeata (Barbados gooseberry).